Consider the following 223-residue polypeptide: Nitrate reductase gamma chain (223 aa).

A helical transmembrane segment spans residues 2–27; that stretch reads SGQILWGIMPYIVLTIFIGGHIYRYQ. Residues 28 to 45 are Cytoplasmic-facing; that stretch reads HDQFGWTAKSSELLEKKK. A helical membrane pass occupies residues 46–68; sequence LAAGSTLFHWGLLCVVGGHVMGI. Heme b is bound by residues H54 and H64. The Extracellular segment spans residues 69–81; the sequence is LIPEGVYASLGIS. A helical transmembrane segment spans residues 82 to 111; it reads EHMYHKMAIGAGLPAGIAACTGLVILTYRR. The Cytoplasmic segment spans residues 112-123; it reads LFDKRIRKTSSP. Residues 124–147 form a helical membrane-spanning segment; the sequence is SDILTLLLLLFMMLSGVAATFLNI. At 148 to 180 the chain is on the extracellular side; that stretch reads DSKGFDYRTTVGPWFREIVLFRPDASLMESVPL. A helical transmembrane segment spans residues 181-196; that stretch reads WFKFHIVIGYVVFILW. Residues H185 and H203 each contribute to the heme b site. Residues 197 to 223 lie on the Cytoplasmic side of the membrane; that stretch reads PFTRLVHVFSLPLKYLTRSYVVYRKRS.

Heme is required as a cofactor.

It is found in the cell membrane. It catalyses the reaction nitrate + a quinol = a quinone + nitrite + H2O. In terms of biological role, the gamma chain is a membrane-embedded heme-iron unit resembling cytochrome b, which transfers electrons from quinones to the beta subunit. The protein is Nitrate reductase gamma chain (narI) of Bacillus subtilis (strain 168).